Consider the following 676-residue polypeptide: Methionine--tRNA ligase (676 aa).

Positions 11–21 (PYANGPCHLGH) match the 'HIGH' region motif. Positions 143, 146, 156, and 159 each coordinate Zn(2+). A 'KMSKS' region motif is present at residues 326–330 (KMSTS). Threonine 329 contacts ATP. One can recognise a tRNA-binding domain in the interval 581–676 (EFGKVKLVVG…TEGNVGEYIK (96 aa)).

It belongs to the class-I aminoacyl-tRNA synthetase family. MetG type 1 subfamily. Homodimer. It depends on Zn(2+) as a cofactor.

Its subcellular location is the cytoplasm. The enzyme catalyses tRNA(Met) + L-methionine + ATP = L-methionyl-tRNA(Met) + AMP + diphosphate. In terms of biological role, is required not only for elongation of protein synthesis but also for the initiation of all mRNA translation through initiator tRNA(fMet) aminoacylation. The polypeptide is Methionine--tRNA ligase (Methanosphaera stadtmanae (strain ATCC 43021 / DSM 3091 / JCM 11832 / MCB-3)).